Here is a 2091-residue protein sequence, read N- to C-terminus: Protein Ycf2 (2091 aa).

Residues 191 to 210 (DSSQLKGSSDQSRDPLDSIS) form a disordered region. 1432-1439 (GSIGTGRS) is an ATP binding site.

The protein belongs to the Ycf2 family.

The protein localises to the plastid. It localises to the chloroplast stroma. Probable ATPase of unknown function. Its presence in a non-photosynthetic plant (Epifagus virginiana) and experiments in tobacco indicate that it has an essential function which is probably not related to photosynthesis. The protein is Protein Ycf2 of Daucus carota (Wild carrot).